An 89-amino-acid polypeptide reads, in one-letter code: MTILASISSIGNVKSISKSNNFSSLSNSSLQSSNSIQCGGCGGGSPLIGTVGNLVGGVLVGTGIIVGTVVGTVNGVVGGLLSGPNCGCH.

Belongs to the hssA/B family.

This chain is HssA/B-like protein 15 (hssl15), found in Dictyostelium discoideum (Social amoeba).